The sequence spans 702 residues: NAD(P)H-quinone oxidoreductase subunit 5, chloroplastic (702 aa).

15 consecutive transmembrane segments (helical) span residues 1-21 (WVIPLLPLPVIMSMGFGLFFI), 31-51 (IWAFPSVLFLSIAIVYSVHLS), 81-101 (IDPLTSIMLILITTVGILVLI), 117-137 (FVYISFFTTSMLGLVTSSNLI), 139-159 (IYFFWELVGMCSYLLIGFWFT), 177-197 (GDFGLLLGILGFFWITGSLEF), 211-231 (NGINSLLTTLCAFLLFLGAVA), 250-270 (TPISALIHAATMVAAGIFLLA), 272-292 (LFPLFISIPLIMTLISLVGTI), 319-339 (LGYMMLALGIGSYQAALFHLI), 346-366 (ALLFLGSGSVIHSMEPLVGYS), 388-408 (TTFLWGTLSLCGIPPLACFWS), 417-437 (WLYSPFFGIIASFTAGLTAFY), 534-554 (LFPLLILLFFTLFIGFIGISF), and 602-622 (SLAIIGLFIAYILYGSAYSFF).

It belongs to the complex I subunit 5 family. As to quaternary structure, NDH is composed of at least 16 different subunits, 5 of which are encoded in the nucleus.

Its subcellular location is the plastid. The protein localises to the chloroplast thylakoid membrane. The enzyme catalyses a plastoquinone + NADH + (n+1) H(+)(in) = a plastoquinol + NAD(+) + n H(+)(out). It catalyses the reaction a plastoquinone + NADPH + (n+1) H(+)(in) = a plastoquinol + NADP(+) + n H(+)(out). In terms of biological role, NDH shuttles electrons from NAD(P)H:plastoquinone, via FMN and iron-sulfur (Fe-S) centers, to quinones in the photosynthetic chain and possibly in a chloroplast respiratory chain. The immediate electron acceptor for the enzyme in this species is believed to be plastoquinone. Couples the redox reaction to proton translocation, and thus conserves the redox energy in a proton gradient. The sequence is that of NAD(P)H-quinone oxidoreductase subunit 5, chloroplastic (ndhF) from Poa pratensis (Kentucky bluegrass).